The chain runs to 445 residues: Histamine H3 receptor (445 aa).

The Extracellular portion of the chain corresponds to 1-40 (MERAPPDGLMNASGALAGEAAAAAGGARTFSAAWTAVLAA). The N-linked (GlcNAc...) asparagine glycan is linked to Asn-11. Residues 41-61 (LMALLIVATVLGNALVMLAFV) traverse the membrane as a helical segment. At 62-71 (ADSSLRTQNN) the chain is on the cytoplasmic side. A helical membrane pass occupies residues 72-92 (FFLLNLAISDFLVGVFCIPLY). Topologically, residues 93–109 (VPYVLTGRWTFGRGLCK) are extracellular. An intrachain disulfide couples Cys-108 to Cys-189. Residues 110 to 130 (LWLVVDYLLCTSSVFNIVLIS) traverse the membrane as a helical segment. Topologically, residues 131–157 (YDRFLSVTRAVSYRAQQGDTRRAVRKM) are cytoplasmic. The chain crosses the membrane as a helical span at residues 158–178 (VLVWVLAFLLYGPAILSWEYL). The Extracellular portion of the chain corresponds to 179-197 (SGGSSIPEGHCYAEFFYNW). A helical membrane pass occupies residues 198–218 (YFLITASTLEFFTPFLSVTFF). Topologically, residues 219-359 (NLSIYLNIQR…LSRDKKVAKS (141 aa)) are cytoplasmic. Disordered stretches follow at residues 236–264 (GGAR…WGCW) and 288–336 (AGEA…LEKR). Positions 299 to 312 (AAASPTSSSGSSSR) are enriched in low complexity. The helical transmembrane segment at 360-380 (LAIIVSIFGLCWAPYTLLMII) threads the bilayer. Residues 381–398 (RAACHGHCVPDYWYETSF) are Extracellular-facing. A helical transmembrane segment spans residues 399-419 (WLLWANSAVNPVLYPLCHYSF). Topologically, residues 420–445 (RRAFTKLLCPQKLKVQPHSSLEHCWK) are cytoplasmic. Residue Ser-439 is modified to Phosphoserine.

This sequence belongs to the G-protein coupled receptor 1 family. As to expression, expressed widely and abundantly throughout the brain. Highly expressed in discrete neuronal populations such as pyramidal cells in cerebral cortex or cerebellar Purkinje cells.

The protein localises to the cell membrane. In terms of biological role, the H3 subclass of histamine receptors could mediate the histamine signals in CNS and peripheral nervous system. Signals through the inhibition of adenylate cyclase and displays high constitutive activity (spontaneous activity in the absence of agonist). The chain is Histamine H3 receptor (HRH3) from Cavia porcellus (Guinea pig).